Here is a 202-residue protein sequence, read N- to C-terminus: LexA repressor 2 (202 aa).

Residues 28-48 (LAEISEAFGFASRSVARKHIV) constitute a DNA-binding region (H-T-H motif). Residues serine 123 and lysine 160 each act as for autocatalytic cleavage activity in the active site.

It belongs to the peptidase S24 family. In terms of assembly, homodimer.

The catalysed reaction is Hydrolysis of Ala-|-Gly bond in repressor LexA.. Its function is as follows. Represses a number of genes involved in the response to DNA damage (SOS response), including recA and lexA. In the presence of single-stranded DNA, RecA interacts with LexA causing an autocatalytic cleavage which disrupts the DNA-binding part of LexA, leading to derepression of the SOS regulon and eventually DNA repair. The protein is LexA repressor 2 of Pseudomonas syringae pv. tomato (strain ATCC BAA-871 / DC3000).